Here is a 69-residue protein sequence, read N- to C-terminus: Conotoxin Cal12.1p4 (69 aa).

The propeptide occupies 1 to 23 (DLITNSYTRGKPRHVTSWRNLKT).

Post-translationally, contains 4 disulfide bonds. Expressed by the venom duct.

It localises to the secreted. In Californiconus californicus (California cone), this protein is Conotoxin Cal12.1p4.